A 298-amino-acid polypeptide reads, in one-letter code: Protoheme IX farnesyltransferase 1 (298 aa).

Helical transmembrane passes span 21–41 (QVWWLLVFIGLIGSILAINSF), 43–63 (SYLIILLLVALVANMTGSMGA), 94–114 (KGAFLFGIILSLFSIFILLIF), 118–138 (LAALFMFLGLFDNVFIYSYLL), 144–164 (YSIILGGFSGAFPVLIGWYTV), 168–188 (FSWIPFILFFLVMFWIPVHVW), 215–235 (TAVSISLSSMLLILFSVIPYF), 236–256 (LGFFNYLYLLVILILSVPIVI), and 274–294 (FIYTAPYLTFVFFIVMIIHII).

This sequence belongs to the UbiA prenyltransferase family. Protoheme IX farnesyltransferase subfamily.

It is found in the cell membrane. It carries out the reaction heme b + (2E,6E)-farnesyl diphosphate + H2O = Fe(II)-heme o + diphosphate. Its pathway is porphyrin-containing compound metabolism; heme O biosynthesis; heme O from protoheme: step 1/1. Its function is as follows. Converts heme B (protoheme IX) to heme O by substitution of the vinyl group on carbon 2 of heme B porphyrin ring with a hydroxyethyl farnesyl side group. The polypeptide is Protoheme IX farnesyltransferase 1 (Picrophilus torridus (strain ATCC 700027 / DSM 9790 / JCM 10055 / NBRC 100828 / KAW 2/3)).